A 429-amino-acid polypeptide reads, in one-letter code: UDP-N-acetylglucosamine 1-carboxyvinyltransferase (429 aa).

Residue 22–23 coordinates phosphoenolpyruvate; the sequence is KN. Arg93 provides a ligand contact to UDP-N-acetyl-alpha-D-glucosamine. Cys117 serves as the catalytic Proton donor. Cys117 carries the 2-(S-cysteinyl)pyruvic acid O-phosphothioketal modification. Residues 122–126, Asp307, and Val329 contribute to the UDP-N-acetyl-alpha-D-glucosamine site; that span reads RPVDL.

This sequence belongs to the EPSP synthase family. MurA subfamily.

Its subcellular location is the cytoplasm. The catalysed reaction is phosphoenolpyruvate + UDP-N-acetyl-alpha-D-glucosamine = UDP-N-acetyl-3-O-(1-carboxyvinyl)-alpha-D-glucosamine + phosphate. It functions in the pathway cell wall biogenesis; peptidoglycan biosynthesis. Its function is as follows. Cell wall formation. Adds enolpyruvyl to UDP-N-acetylglucosamine. The protein is UDP-N-acetylglucosamine 1-carboxyvinyltransferase of Chloroherpeton thalassium (strain ATCC 35110 / GB-78).